The sequence spans 87 residues: MKSTIFVLTLLIFVSLYFNIIVYVSFSFIGTSEIVVPSSFKRVEGPVTAASADFCYKCSRGCYRRYRRPVFCQGSICRCSSFIDDGY.

The N-terminal stretch at 1–34 (MKSTIFVLTLLIFVSLYFNIIVYVSFSFIGTSEI) is a signal peptide. Disulfide bonds link C55-C72, C58-C77, and C62-C79.

Belongs to the DEFL family.

Its subcellular location is the secreted. The sequence is that of Defensin-like protein 223 from Arabidopsis thaliana (Mouse-ear cress).